We begin with the raw amino-acid sequence, 528 residues long: CTD kinase subunit alpha (528 aa).

Positions 1-15 (MSYNNGNTYSKSYSR) are enriched in polar residues. A disordered region spans residues 1–148 (MSYNNGNTYS…NTSNDIKNGY (148 aa)). The residue at position 14 (Ser14) is a Phosphoserine; by autocatalysis. Positions 37–44 (PPKRIRTD) match the Nuclear localization signal motif. Residues 45 to 103 (SGYQSNMDNISSHRVNSNDQPGHTKSRGNNNLSRYNDTSFQTSSRYQGSRYNNNNTSYE) are compositionally biased toward polar residues. The segment covering 104-118 (NRPKSIKRDETKAEF) has biased composition (basic and acidic residues). Positions 134 to 144 (YNNSSNTSNDI) are enriched in polar residues. Residues 183-469 (YLRIMQVGEG…ATEALQSDYF (287 aa)) form the Protein kinase domain. Residues 189 to 197 (VGEGTYGKV) and Lys212 each bind ATP. The Proton acceptor role is filled by Asp306. Thr338 is modified (phosphothreonine). The tract at residues 497–528 (QKRPNILSTNTNNKGNGNSNNNNNNNNDDDDK) is disordered. A compositionally biased stretch (low complexity) spans 504–522 (STNTNNKGNGNSNNNNNNN).

Belongs to the protein kinase superfamily. CMGC Ser/Thr protein kinase family. CDC2/CDKX subfamily. In terms of assembly, CTDK-I consists of three subunits, CTK1, CTK2 and CTK3 (also called alpha, beta and gamma). Interacts directly with the CTK2 and CTK3 subunits, this interaction is required for kinase activity. Interacts with RNA polymerase I. Interacts with SNF1, but only at low glucose concentrations. Interacts with translating ribosomes. In terms of processing, phosphorylated on Thr-338 by CAK1. Phosphorylation is essential for the elevated CTD Ser-2 phosphorylation and required to activate transcription of stationary-phase genes during the diauxic shift.

The protein localises to the nucleus. Its subcellular location is the nucleolus. The protein resides in the cytoplasm. The catalysed reaction is [DNA-directed RNA polymerase] + ATP = phospho-[DNA-directed RNA polymerase] + ADP + H(+). Its function is as follows. Catalytic subunit of the CTDK-I complex, which hyperphosphorylates the C-terminal heptapeptide repeat domain (CTD) of the largest RNA polymerase II subunit. CTDK-I phosphorylates 'Ser-5' if the CTD substrate is not phosphorylated at 'Ser-5', but will phosphorylate 'Ser-2' of a CTD substrate if 'Ser-5' is already phosphorylated. CTDK-I is also more reactive toward substrates that are prephosphorylated at 'Ser-2' or 'Ser-5' compared with an unphosphorylated CTD substrate, therefore efficiently creating doubly phosphorylated CTD repeats. Involved in RNA polymerase II transcriptional elongation, and through PTI1, pre-mRNA 3'-end processing. Participates in both positive and negative regulation of CTD phosphorylation. Required for DNA damage induced transcription, including the expression of the RNR genes, and reprogramming of gene expression upon amino acid starvation. Required for SET2 mediated H3K36 methylation. Also regulates H3K4 methylation. Controls the maintenance of suppressive chromatin in the coding regions of genes by both promoting H3K36 methylation, which leads to histone deacetylation, and catalyzing phosphorylation of the CTD required to localize H3K4 chromatin modification specifically to the 5' ends of genes, thereby creating a boundary for H3K4 methylation that prevents a mark associated with transcriptional initiation from spreading into the bodies of genes. Involved in RNA polymerase I transcription. Involved in telomere maintenance. Acts together with SNF1 to induce GSY2 transcription in response to glucose limitation. Involved in the adaptation to alternative carbon sources, including galactose, glycerol and ethanol, but not raffinose. Required for the integrity of the rDNA locus. Functions in translation elongation by enhancing decoding fidelity. Needed for translational accuracy by phosphorylating RPS2. The chain is CTD kinase subunit alpha (CTK1) from Saccharomyces cerevisiae (strain ATCC 204508 / S288c) (Baker's yeast).